Reading from the N-terminus, the 206-residue chain is Probable glutathione S-transferase 9 (206 aa).

Positions 2–79 (VSYKLIYFQS…YLSKQFGISG (78 aa)) constitute a GST N-terminal domain. Glutathione is bound by residues Y8, W39, K43, 49–51 (GQV), and 63–64 (QS). The region spanning 81 to 206 (SSWEEAQVDA…WIEKRPVTSR (126 aa)) is the GST C-terminal domain.

It belongs to the GST superfamily. Sigma family.

It catalyses the reaction RX + glutathione = an S-substituted glutathione + a halide anion + H(+). In terms of biological role, conjugation of reduced glutathione to a wide number of exogenous and endogenous hydrophobic electrophiles. This chain is Probable glutathione S-transferase 9 (gst-9), found in Caenorhabditis elegans.